The following is a 321-amino-acid chain: Thioredoxin reductase tcpT (321 aa).

FAD contacts are provided by residues 14 to 17 (GGPA), 36 to 41 (DSGRYR), His-49, and Ala-114. Cys-138 and Cys-141 are joined by a disulfide. Residues Asp-282 and 289–290 (NV) each bind FAD.

It belongs to the class-II pyridine nucleotide-disulfide oxidoreductase family. As to quaternary structure, homodimer. FAD serves as cofactor.

The protein operates within secondary metabolite biosynthesis. In terms of biological role, thioredoxin reductase; part of the gene cluster that mediates the biosynthesis of an unusual class of epipolythiodioxopiperazines (ETPs) lacking the reactive thiol group important for toxicity. Firstly, L-tyrosine is prenylated by tcpD, before undergoing condensation with L-glycine in a reaction catalyzed by the NRPS tcpP leading to the diketopiperazine (DKP) backbone. Afterwards the alpha-carbon of tyrosine is oxidized by the cytochrome P450 tcpC to form a hydroxyl group. However, in contrast other ETP biosynthesis pathways studied so far, tcpC is not able to bishydroxylate the DKP at both alpha-carbon positions, but hydroxylates the alpha-carbon of the tyrosine part and the nitrogen of the glycine part. The next steps involve an alpha,beta-elimination reaction catalyzed by tcpI, a methylation by the methyltransferase tcpN the action of the four enzyme cascade tcpG/K/J/I. Due to a dysfunctional cytochrome P450 monooxygenase tcpC, the pathway leads to the biosynthesis of probable non-toxic metabolites lacking the reactive thiol group. This Claviceps purpurea (strain 20.1) (Ergot fungus) protein is Thioredoxin reductase tcpT.